A 276-amino-acid polypeptide reads, in one-letter code: Large ribosomal subunit protein uL2 (276 aa).

Residues 223–276 are disordered; the sequence is GAAMNPVDHPHGGGEGRAPRGRPPASPWGWQTKGLKTRKRRKPSSRFIIARRKK. The span at 230–240 shows a compositional bias: basic and acidic residues; the sequence is DHPHGGGEGRA. Over residues 257–276 the composition is skewed to basic residues; that stretch reads LKTRKRRKPSSRFIIARRKK.

The protein belongs to the universal ribosomal protein uL2 family. Part of the 50S ribosomal subunit. Forms a bridge to the 30S subunit in the 70S ribosome.

One of the primary rRNA binding proteins. Required for association of the 30S and 50S subunits to form the 70S ribosome, for tRNA binding and peptide bond formation. It has been suggested to have peptidyltransferase activity; this is somewhat controversial. Makes several contacts with the 16S rRNA in the 70S ribosome. The chain is Large ribosomal subunit protein uL2 from Thermus thermophilus (strain ATCC BAA-163 / DSM 7039 / HB27).